Consider the following 342-residue polypeptide: Replication factor C subunit 4 (342 aa).

ATP is bound by residues valine 24, valine 36, 61 to 68, asparagine 157, and arginine 215; that span reads GMPGIGKT.

It belongs to the activator 1 small subunits family. In terms of assembly, heteropentamer of subunits rfc1, rfc2, rfc3, rfc4 and rfc5 that forms a complex (RFC) with PCNA in the presence of ATP. Two other complexes exist where rfc1 can be replaced by either ctf18 or elg1 to form the ctf18-RFC or the elg1-RFC complexes respectively.

It is found in the nucleus. The elongation of primed DNA templates by DNA polymerase delta and epsilon requires the action of the accessory proteins PCNA and activator 1. The protein is Replication factor C subunit 4 (rfc4) of Schizosaccharomyces pombe (strain 972 / ATCC 24843) (Fission yeast).